The primary structure comprises 223 residues: Ribose-5-phosphate isomerase A (223 aa).

Residues 29-32 (TGST), 82-85 (DGAD), and 95-98 (KGGG) contribute to the substrate site. Residue E104 is the Proton acceptor of the active site. K122 lines the substrate pocket.

The protein belongs to the ribose 5-phosphate isomerase family. As to quaternary structure, homodimer.

It catalyses the reaction aldehydo-D-ribose 5-phosphate = D-ribulose 5-phosphate. It participates in carbohydrate degradation; pentose phosphate pathway; D-ribose 5-phosphate from D-ribulose 5-phosphate (non-oxidative stage): step 1/1. Its function is as follows. Catalyzes the reversible conversion of ribose-5-phosphate to ribulose 5-phosphate. In Neisseria gonorrhoeae (strain ATCC 700825 / FA 1090), this protein is Ribose-5-phosphate isomerase A.